The primary structure comprises 679 residues: Methionine--tRNA ligase (679 aa).

The 'HIGH' region motif lies at 15–25 (PYANGSIHLGH). 4 residues coordinate Zn(2+): Cys-146, Cys-149, Cys-159, and Cys-162. The 'KMSKS' region motif lies at 332 to 336 (KMSKS). Residue Lys-335 coordinates ATP. A tRNA-binding domain is found at 577-679 (DFAKVDMRVA…AGALPGMPVK (103 aa)).

It belongs to the class-I aminoacyl-tRNA synthetase family. MetG type 1 subfamily. As to quaternary structure, homodimer. Zn(2+) is required as a cofactor.

Its subcellular location is the cytoplasm. It carries out the reaction tRNA(Met) + L-methionine + ATP = L-methionyl-tRNA(Met) + AMP + diphosphate. In terms of biological role, is required not only for elongation of protein synthesis but also for the initiation of all mRNA translation through initiator tRNA(fMet) aminoacylation. In Sodalis glossinidius (strain morsitans), this protein is Methionine--tRNA ligase.